An 833-amino-acid chain; its full sequence is MTFYDHTAIEPKWQAFWADNHTFKTGTDASKPKFYALDMFPYPSGAGLHVGHPEGYTATDILSRFKRAQGHNVLHPMGWDAFGLPAEQYAMDTGNDPAEFTAENIANFKRQINALGFSYDWDREVNTTDPNYYKWTQWIFTKLYEKGLAYEAEVPVNWVEELGTAIANEEVLPDGTSERGGYPVVRKPMRQWMLKITAYAERLLEDLEEVDWPESIKDMQRNWIDKSTGANVTFKVKDTDKDFTVFTTRPDTLFGATYAVLAPEHALVDAITTADQAEAVADYKRQASLKSDLARTDLAKEKTGVWTGSYAINPVNGNEMPVWIADYVLASYGTGAIMAVPAHDERDWEFAKQFNLDIIPVLEGGNVEEAAFTEDGLHINSDFLDGLDKASAIAKMVEWLEAEGVGNEKVTYRLRDWLFSRQRYWGEPIPIIHWEDGTSTAVPESELPLVLPVTKDIRPSGTGESPLANVTDWLEVTREDGVKGRRETNTMPQWAGSSWYYLRYIDPHNTEKLADEELLKQWLPVDIYVGGAEHAVLHLLYARFWHKVLYDLGVVPTKEPFQKLFNQGMILGTSYRDSRGALVATDKVEKRDGSFFHVETGEELEQAPAKMSKSLKNVVNPDDVVEQYGADTLRVYEMFMGPLDASIAWSEEGLEGSRKFLDRVYRLITTKEITEENSGALDKVYNETVKAVTEQVDQMKFNTAIAQLMVFVNAANKEDKLFSDYAKGFVQLIAPFAPHLGEELWQALTASGESISYVPWPSYDESKLVENDVEIVVQIKGKVKAKLVVAKDLSREELQEVALANEKVQAEIAGKDIIKVIAVPNKLVNIVIK.

Residues 41 to 52 (PYPSGAGLHVGH) carry the 'HIGH' region motif. The 'KMSKS' region motif lies at 610-614 (KMSKS). An ATP-binding site is contributed by Lys-613.

It belongs to the class-I aminoacyl-tRNA synthetase family.

It localises to the cytoplasm. It catalyses the reaction tRNA(Leu) + L-leucine + ATP = L-leucyl-tRNA(Leu) + AMP + diphosphate. The chain is Leucine--tRNA ligase from Streptococcus pyogenes serotype M4 (strain MGAS10750).